We begin with the raw amino-acid sequence, 90 residues long: Small ribosomal subunit protein bS16 (90 aa).

The protein belongs to the bacterial ribosomal protein bS16 family.

This is Small ribosomal subunit protein bS16 from Lactobacillus helveticus (strain DPC 4571).